A 321-amino-acid polypeptide reads, in one-letter code: Probable pectate lyase A (321 aa).

The first 20 residues, 1–20 (MANFKLFLALAACLSGQALA), serve as a signal peptide directing secretion. N-linked (GlcNAc...) asparagine glycosylation occurs at Asn-93. 3 residues coordinate Ca(2+): Asp-134, Asp-163, and Asp-167. Residue Arg-220 is part of the active site.

The protein belongs to the polysaccharide lyase 1 family. It depends on Ca(2+) as a cofactor.

It localises to the secreted. It carries out the reaction Eliminative cleavage of (1-&gt;4)-alpha-D-galacturonan to give oligosaccharides with 4-deoxy-alpha-D-galact-4-enuronosyl groups at their non-reducing ends.. Its function is as follows. Pectinolytic enzyme consist of four classes of enzymes: pectin lyase, polygalacturonase, pectin methylesterase and rhamnogalacturonase. Among pectinolytic enzymes, pectin lyase is the most important in depolymerization of pectin, since it cleaves internal glycosidic bonds of highly methylated pectins. Favors pectate, the anion, over pectin, the methyl ester. The protein is Probable pectate lyase A (plyA) of Aspergillus flavus (strain ATCC 200026 / FGSC A1120 / IAM 13836 / NRRL 3357 / JCM 12722 / SRRC 167).